The chain runs to 371 residues: 3-dehydroquinate synthase (371 aa).

NAD(+)-binding positions include 72–77 (DGEEHK), 106–110 (GVVGD), 130–131 (TT), Lys-143, Lys-152, and 170–173 (TLKT). Zn(2+)-binding residues include Glu-185, His-248, and His-265.

It belongs to the sugar phosphate cyclases superfamily. Dehydroquinate synthase family. Requires Co(2+) as cofactor. Zn(2+) serves as cofactor. It depends on NAD(+) as a cofactor.

The protein resides in the cytoplasm. It carries out the reaction 7-phospho-2-dehydro-3-deoxy-D-arabino-heptonate = 3-dehydroquinate + phosphate. The protein operates within metabolic intermediate biosynthesis; chorismate biosynthesis; chorismate from D-erythrose 4-phosphate and phosphoenolpyruvate: step 2/7. In terms of biological role, catalyzes the conversion of 3-deoxy-D-arabino-heptulosonate 7-phosphate (DAHP) to dehydroquinate (DHQ). The protein is 3-dehydroquinate synthase of Pelotomaculum thermopropionicum (strain DSM 13744 / JCM 10971 / SI).